Reading from the N-terminus, the 600-residue chain is Proline--tRNA ligase (600 aa).

It belongs to the class-II aminoacyl-tRNA synthetase family. ProS type 1 subfamily. Homodimer.

Its subcellular location is the cytoplasm. The catalysed reaction is tRNA(Pro) + L-proline + ATP = L-prolyl-tRNA(Pro) + AMP + diphosphate. Functionally, catalyzes the attachment of proline to tRNA(Pro) in a two-step reaction: proline is first activated by ATP to form Pro-AMP and then transferred to the acceptor end of tRNA(Pro). As ProRS can inadvertently accommodate and process non-cognate amino acids such as alanine and cysteine, to avoid such errors it has two additional distinct editing activities against alanine. One activity is designated as 'pretransfer' editing and involves the tRNA(Pro)-independent hydrolysis of activated Ala-AMP. The other activity is designated 'posttransfer' editing and involves deacylation of mischarged Ala-tRNA(Pro). The misacylated Cys-tRNA(Pro) is not edited by ProRS. This chain is Proline--tRNA ligase, found in Prochlorococcus marinus (strain AS9601).